The chain runs to 193 residues: Peptidyl-tRNA hydrolase (193 aa).

Tyrosine 14 is a tRNA binding site. Histidine 19 functions as the Proton acceptor in the catalytic mechanism. Residues phenylalanine 64, asparagine 66, and asparagine 112 each contribute to the tRNA site.

Belongs to the PTH family. Monomer.

It is found in the cytoplasm. The enzyme catalyses an N-acyl-L-alpha-aminoacyl-tRNA + H2O = an N-acyl-L-amino acid + a tRNA + H(+). Its function is as follows. Hydrolyzes ribosome-free peptidyl-tRNAs (with 1 or more amino acids incorporated), which drop off the ribosome during protein synthesis, or as a result of ribosome stalling. Catalyzes the release of premature peptidyl moieties from peptidyl-tRNA molecules trapped in stalled 50S ribosomal subunits, and thus maintains levels of free tRNAs and 50S ribosomes. This Bartonella quintana (strain Toulouse) (Rochalimaea quintana) protein is Peptidyl-tRNA hydrolase.